A 127-amino-acid chain; its full sequence is Glycine cleavage system H protein (127 aa).

The region spanning 22-104 is the Lipoyl-binding domain; that stretch reads TVRIGITDFA…YDKAWMIVIE (83 aa). Position 63 is an N6-lipoyllysine (Lys-63).

Belongs to the GcvH family. The glycine cleavage system is composed of four proteins: P, T, L and H. Requires (R)-lipoate as cofactor.

In terms of biological role, the glycine cleavage system catalyzes the degradation of glycine. The H protein shuttles the methylamine group of glycine from the P protein to the T protein. Is also involved in protein lipoylation via its role as an octanoyl/lipoyl carrier protein intermediate. In Anoxybacillus flavithermus (strain DSM 21510 / WK1), this protein is Glycine cleavage system H protein.